Reading from the N-terminus, the 158-residue chain is Protein Smg homolog (158 aa).

It belongs to the Smg family.

The chain is Protein Smg homolog from Alteromonas mediterranea (strain DSM 17117 / CIP 110805 / LMG 28347 / Deep ecotype).